Reading from the N-terminus, the 217-residue chain is Large ribosomal subunit protein uL29m (217 aa).

The protein belongs to the universal ribosomal protein uL29 family. As to quaternary structure, component of the mitochondrial large ribosomal subunit. Mature mitochondrial ribosomes consist of a small (37S) and a large (54S) subunit. The 37S subunit contains at least 33 different proteins and 1 molecule of RNA (15S). The 54S subunit contains at least 45 different proteins and 1 molecule of RNA (21S).

Its subcellular location is the mitochondrion. This chain is Large ribosomal subunit protein uL29m (mrpl4), found in Aspergillus fumigatus (strain ATCC MYA-4609 / CBS 101355 / FGSC A1100 / Af293) (Neosartorya fumigata).